A 1327-amino-acid polypeptide reads, in one-letter code: Kinectin (1327 aa).

The Cytoplasmic portion of the chain corresponds to methionine 1 to tyrosine 8. A helical; Signal-anchor for type II membrane protein membrane pass occupies residues phenylalanine 9 to methionine 29. Over lysine 30–threonine 1327 the chain is Lumenal. 2 disordered regions span residues serine 49–lysine 181 and leucine 197–lysine 216. Asparagine 69 carries an N-linked (GlcNAc...) asparagine glycan. Basic and acidic residues-rich tracts occupy residues arginine 73 to leucine 86 and valine 111 to alanine 135. Residues serine 75 and serine 77 each carry the phosphoserine modification. The span at leucine 163–lysine 173 shows a compositional bias: basic residues. The stretch at glutamate 329–threonine 1327 forms a coiled coil. An N-linked (GlcNAc...) asparagine glycan is attached at asparagine 1031. The residue at position 1060 (serine 1060) is a Phosphoserine. Asparagine 1066 is a glycosylation site (N-linked (GlcNAc...) asparagine). Serine 1290 bears the Phosphoserine mark.

It belongs to the kinectin family. As to expression, expressed in all tissues examined including 12-day embryo, adult heart, brain, ovary, kidney, lung, small intestine, spleen, thymus and pancreas.

Its subcellular location is the endoplasmic reticulum membrane. In terms of biological role, receptor for kinesin thus involved in kinesin-driven vesicle motility. Accumulates in integrin-based adhesion complexes (IAC) upon integrin aggregation by fibronectin. The sequence is that of Kinectin from Mus musculus (Mouse).